Here is a 740-residue protein sequence, read N- to C-terminus: MLKLFSAFRKNKIWDFNGGIHPPEMKTQSNGTPLRQVPLAQRFVIPLKQHIGAEGELCVSVGDKVLRGQPLTRGRGKMLPVHAPTSGTVTAIAPHSTAHPSALAELSVIIDADGEDCWIPRDGWADYRTRSREELIERIHQFGVAGLGGAGFPTGVKLQGGGDKIETLIINAAECEPYITADDRLMQDCAAQVVEGIRILAHILQPREILIGIEDNKPQAISMLRAVLADSNDISLRVIPTKYPSGGAKQLTYILTGKQVPHGGRSSDIGVLMQNVGTAYAVKRAVIDGEPITERVVTLTGEAIARPGNVWARLGTPVRHLLNDAGFCPSADQMVIMGGPLMGFTLPWLDVPVVKITNCLLAPSANELGEPQEEQSCIRCSACADACPADLLPQQLYWFSKGQQHDKATTHNIADCIECGACAWVCPSNIPLVQYFRQEKAEIAAIRQEEKRAAEAKARFEARQARLEREKAARLERHKSAAVQPAAKDKDAIAAALARVKEKQAQATQPIVIKAGERPDNSAIIAAREARKAQARAKQAELQQTNDAATVADPRKTAVEAAIARAKARKLEQQQANAEPEQQVDPRKAAVEAAIARAKARKLEQQQANAKPEEQVDPRKAAVEAAIARAKARKLEQQQANAEPEEQVDPRKAAVEAAIARAKARKLEQQQANAEPEEQVDPRKAAVEAAIARAKARKLEQQQTNAEPEEQVDPRKAAVAAAIARAQAKKAAQQKVVNED.

4Fe-4S ferredoxin-type domains are found at residues 369-397 and 407-436; these read GEPQEEQSCIRCSACADACPADLLPQQLY and KATTHNIADCIECGACAWVCPSNIPLVQYF. Residues cysteine 377, cysteine 380, cysteine 383, cysteine 387, cysteine 416, cysteine 419, cysteine 422, and cysteine 426 each contribute to the [4Fe-4S] cluster site. Disordered regions lie at residues 602–621 and 660–718; these read KLEQQQANAKPEEQVDPRKA and ARAK…RKAA. Residues 611 to 621 show a composition bias toward basic and acidic residues; the sequence is KPEEQVDPRKA.

Belongs to the 4Fe4S bacterial-type ferredoxin family. RnfC subfamily. The complex is composed of six subunits: RsxA, RsxB, RsxC, RsxD, RsxE and RsxG. Requires [4Fe-4S] cluster as cofactor.

It is found in the cell inner membrane. In terms of biological role, part of a membrane-bound complex that couples electron transfer with translocation of ions across the membrane. Required to maintain the reduced state of SoxR. This is Ion-translocating oxidoreductase complex subunit C from Escherichia coli O9:H4 (strain HS).